The chain runs to 84 residues: MGNVAIIVKIMPESPEVDREALKAAVRAAVPVDDIQEEPIGFGLVALKAAVVVPDKAGAPDEVEAALQKIEGVASAEIVESTLV.

This sequence belongs to the EF-1-beta/EF-1-delta family.

Its function is as follows. Promotes the exchange of GDP for GTP in EF-1-alpha/GDP, thus allowing the regeneration of EF-1-alpha/GTP that could then be used to form the ternary complex EF-1-alpha/GTP/AAtRNA. In Methanoculleus marisnigri (strain ATCC 35101 / DSM 1498 / JR1), this protein is Elongation factor 1-beta.